Consider the following 220-residue polypeptide: Adenylate kinase (220 aa).

10-15 (GAGKGT) contacts ATP. Residues 30-59 (STGDMLRAAVKNCTPLGLKAKEIMDAGGLV) form an NMP region. AMP-binding positions include T31, R36, 57–59 (GLV), 85–88 (GFPR), and Q92. Residues 126-163 (GRRTCPSCGKGFHVLFAPPRKAGVCDFCGADLVQRGDD) are LID. R127 provides a ligand contact to ATP. Zn(2+) is bound by residues C130, C133, C150, and C153. R160 and R171 together coordinate AMP. ATP is bound at residue L199.

It belongs to the adenylate kinase family. As to quaternary structure, monomer.

It localises to the cytoplasm. The catalysed reaction is AMP + ATP = 2 ADP. It functions in the pathway purine metabolism; AMP biosynthesis via salvage pathway; AMP from ADP: step 1/1. Its function is as follows. Catalyzes the reversible transfer of the terminal phosphate group between ATP and AMP. Plays an important role in cellular energy homeostasis and in adenine nucleotide metabolism. The chain is Adenylate kinase from Pelobacter propionicus (strain DSM 2379 / NBRC 103807 / OttBd1).